Reading from the N-terminus, the 482-residue chain is Cobyric acid synthase (482 aa).

The GATase cobBQ-type domain maps to 249-436 (QCKIACLALS…LHGLFTSDDF (188 aa)). The active-site Nucleophile is the Cys-331. His-428 is an active-site residue.

It belongs to the CobB/CobQ family. CobQ subfamily.

The protein operates within cofactor biosynthesis; adenosylcobalamin biosynthesis. Catalyzes amidations at positions B, D, E, and G on adenosylcobyrinic A,C-diamide. NH(2) groups are provided by glutamine, and one molecule of ATP is hydrogenolyzed for each amidation. The sequence is that of Cobyric acid synthase from Bradyrhizobium diazoefficiens (strain JCM 10833 / BCRC 13528 / IAM 13628 / NBRC 14792 / USDA 110).